A 314-amino-acid chain; its full sequence is 4-hydroxy-3-methylbut-2-enyl diphosphate reductase (314 aa).

Cysteine 12 is a [4Fe-4S] cluster binding site. (2E)-4-hydroxy-3-methylbut-2-enyl diphosphate is bound by residues histidine 41 and histidine 74. Dimethylallyl diphosphate is bound by residues histidine 41 and histidine 74. Isopentenyl diphosphate-binding residues include histidine 41 and histidine 74. Cysteine 96 is a [4Fe-4S] cluster binding site. Histidine 124 is a (2E)-4-hydroxy-3-methylbut-2-enyl diphosphate binding site. Histidine 124 is a dimethylallyl diphosphate binding site. Histidine 124 lines the isopentenyl diphosphate pocket. Glutamate 126 serves as the catalytic Proton donor. Residue threonine 167 coordinates (2E)-4-hydroxy-3-methylbut-2-enyl diphosphate. [4Fe-4S] cluster is bound at residue cysteine 197. The (2E)-4-hydroxy-3-methylbut-2-enyl diphosphate site is built by serine 225, serine 226, asparagine 227, and serine 269. Serine 225, serine 226, asparagine 227, and serine 269 together coordinate dimethylallyl diphosphate. Residues serine 225, serine 226, asparagine 227, and serine 269 each coordinate isopentenyl diphosphate.

Belongs to the IspH family. The cofactor is [4Fe-4S] cluster.

The enzyme catalyses isopentenyl diphosphate + 2 oxidized [2Fe-2S]-[ferredoxin] + H2O = (2E)-4-hydroxy-3-methylbut-2-enyl diphosphate + 2 reduced [2Fe-2S]-[ferredoxin] + 2 H(+). It catalyses the reaction dimethylallyl diphosphate + 2 oxidized [2Fe-2S]-[ferredoxin] + H2O = (2E)-4-hydroxy-3-methylbut-2-enyl diphosphate + 2 reduced [2Fe-2S]-[ferredoxin] + 2 H(+). Its pathway is isoprenoid biosynthesis; dimethylallyl diphosphate biosynthesis; dimethylallyl diphosphate from (2E)-4-hydroxy-3-methylbutenyl diphosphate: step 1/1. The protein operates within isoprenoid biosynthesis; isopentenyl diphosphate biosynthesis via DXP pathway; isopentenyl diphosphate from 1-deoxy-D-xylulose 5-phosphate: step 6/6. In terms of biological role, catalyzes the conversion of 1-hydroxy-2-methyl-2-(E)-butenyl 4-diphosphate (HMBPP) into a mixture of isopentenyl diphosphate (IPP) and dimethylallyl diphosphate (DMAPP). Acts in the terminal step of the DOXP/MEP pathway for isoprenoid precursor biosynthesis. This Idiomarina loihiensis (strain ATCC BAA-735 / DSM 15497 / L2-TR) protein is 4-hydroxy-3-methylbut-2-enyl diphosphate reductase.